A 397-amino-acid chain; its full sequence is Elongation factor Tu-1 (397 aa).

The 197-residue stretch at 10–206 (KPHVNIGTIG…AVDESIPEPE (197 aa)) folds into the tr-type G domain. The segment at 19 to 26 (GHIDHGKT) is G1. 19 to 26 (GHIDHGKT) serves as a coordination point for GTP. Position 26 (T26) interacts with Mg(2+). A G2 region spans residues 62–66 (GITIS). The segment at 83-86 (DCPG) is G3. GTP-binding positions include 83 to 87 (DCPGH) and 138 to 141 (NKAD). The tract at residues 138–141 (NKAD) is G4. Residues 176-178 (SAL) form a G5 region.

It belongs to the TRAFAC class translation factor GTPase superfamily. Classic translation factor GTPase family. EF-Tu/EF-1A subfamily. As to quaternary structure, monomer.

The protein localises to the cytoplasm. It carries out the reaction GTP + H2O = GDP + phosphate + H(+). In terms of biological role, GTP hydrolase that promotes the GTP-dependent binding of aminoacyl-tRNA to the A-site of ribosomes during protein biosynthesis. This chain is Elongation factor Tu-1, found in Streptomyces ramocissimus.